Consider the following 140-residue polypeptide: MAIQRTFSIIKPDATKRNLTGAINAKLEAAGLRIVAQKRIHLSKAQAAVFYAVHKERPFYDELCEFMASEPIVVQVLEGEDAIAKNREVMGATNPAEAAEGTIRKEFALSIGENSVHGSDAEDTAKEEIAYFFSGLELVG.

Positions 11, 59, 87, 93, 104, and 114 each coordinate ATP. The active-site Pros-phosphohistidine intermediate is the histidine 117.

The protein belongs to the NDK family. As to quaternary structure, homotetramer. Requires Mg(2+) as cofactor.

Its subcellular location is the cytoplasm. It catalyses the reaction a 2'-deoxyribonucleoside 5'-diphosphate + ATP = a 2'-deoxyribonucleoside 5'-triphosphate + ADP. The enzyme catalyses a ribonucleoside 5'-diphosphate + ATP = a ribonucleoside 5'-triphosphate + ADP. Major role in the synthesis of nucleoside triphosphates other than ATP. The ATP gamma phosphate is transferred to the NDP beta phosphate via a ping-pong mechanism, using a phosphorylated active-site intermediate. In Rhodovulum sulfidophilum (Rhodobacter sulfidophilus), this protein is Nucleoside diphosphate kinase.